The chain runs to 250 residues: Small ribosomal subunit protein uS3 (250 aa).

Residues 39–111 enclose the KH type-2 domain; it reads IRTLIKNHYP…KIQINIFEVK (73 aa).

Belongs to the universal ribosomal protein uS3 family. In terms of assembly, part of the 30S ribosomal subunit. Forms a tight complex with proteins S10 and S14.

Binds the lower part of the 30S subunit head. Binds mRNA in the 70S ribosome, positioning it for translation. The protein is Small ribosomal subunit protein uS3 of Elm witches'-broom phytoplasma.